The sequence spans 622 residues: WD repeat-containing protein 76 (622 aa).

3 disordered regions span residues 75 to 94, 120 to 155, and 189 to 209; these read NSSK…RRKV, ESTR…DFSG, and MIKK…KENE. Positions 80–94 are enriched in basic residues; sequence VVHKKKDRKKTRRKV. WD repeat units follow at residues 310–351, 356–398, 400–438, 443–482, 490–530, 540–584, and 587–622; these read VTKG…EDAM, AHSR…EVYR, EGNS…TSYE, SSLE…SRGS, EHSK…SQLP, VTGR…VHSL, and ECLV…HQET.

Belongs to the WD repeat DDB2/WDR76 family. Interacts with CUL4A and/or CUL4B.

Functionally, specifically binds 5-hydroxymethylcytosine (5hmC), suggesting that it acts as a specific reader of 5hmC. This is WD repeat-containing protein 76 (Wdr76) from Mus musculus (Mouse).